A 784-amino-acid chain; its full sequence is Protein Skeletor, isoforms B/C (784 aa).

An N-terminal signal peptide occupies residues 1-28 (MLAMKDKPWLLLFGLLAALSCLASFGDA). DM13 domains follow at residues 34-143 (GTKI…VSIP) and 151-258 (PQKI…VRLP). Residues 287–419 (LAFEVRWAVA…GAESVVWAIG (133 aa)) enclose the DOMON domain. Residues 451–491 (PLPEGARGNSNSSEQEDSAPAAQSSTGGAGYPPAGRPNVEP) are disordered.

In terms of assembly, interacts with Chro and Mgtor as part of a macromolecular complex forming the spindle matrix. Chro colocalizes with Skeletor (Skel) on the chromosomes at interphase and on spindle during metaphase.

It is found in the cytoplasm. It localises to the cytoskeleton. The protein localises to the spindle. Its subcellular location is the nucleus. The protein resides in the nucleolus. It is found in the chromosome. In terms of biological role, provides structural support to stabilize and organize the microtubule spindle during mitosis (within embryonic somatic cells) and meiosis (within spermatocytes). The role in mitosis regulation depends on the Ran pathway. In Drosophila melanogaster (Fruit fly), this protein is Protein Skeletor, isoforms B/C.